We begin with the raw amino-acid sequence, 92 residues long: Small ribosomal subunit protein uS19 (92 aa).

This sequence belongs to the universal ribosomal protein uS19 family.

Functionally, protein S19 forms a complex with S13 that binds strongly to the 16S ribosomal RNA. This chain is Small ribosomal subunit protein uS19, found in Clostridium botulinum (strain Eklund 17B / Type B).